A 360-amino-acid chain; its full sequence is Heme A synthase (360 aa).

A run of 5 helical transmembrane segments spans residues 13-33, 99-119, 129-149, 160-180, and 199-219; these read AVRW…LVGG, LLGR…LWRG, LWLL…MVAS, YRLA…VWTV, and SALL…VAGL. Residue His-263 coordinates heme. A run of 3 helical transmembrane segments spans residues 265–282, 292–312, and 315–335; these read MTAY…FDAV, GALW…LTLL, and VPIG…TLAV. His-323 is a heme binding site.

Belongs to the COX15/CtaA family. Type 2 subfamily. Interacts with CtaB. It depends on heme b as a cofactor.

It is found in the cell membrane. The catalysed reaction is Fe(II)-heme o + 2 A + H2O = Fe(II)-heme a + 2 AH2. It functions in the pathway porphyrin-containing compound metabolism; heme A biosynthesis; heme A from heme O: step 1/1. In terms of biological role, catalyzes the conversion of heme O to heme A by two successive hydroxylations of the methyl group at C8. The first hydroxylation forms heme I, the second hydroxylation results in an unstable dihydroxymethyl group, which spontaneously dehydrates, resulting in the formyl group of heme A. The chain is Heme A synthase from Bradyrhizobium diazoefficiens (strain JCM 10833 / BCRC 13528 / IAM 13628 / NBRC 14792 / USDA 110).